The following is an 87-amino-acid chain: Large ribosomal subunit protein bL27 (87 aa).

The disordered stretch occupies residues 1–21; the sequence is MAHKKAGGSSRNGRDSESKRL.

It belongs to the bacterial ribosomal protein bL27 family.

The protein is Large ribosomal subunit protein bL27 of Aromatoleum aromaticum (strain DSM 19018 / LMG 30748 / EbN1) (Azoarcus sp. (strain EbN1)).